We begin with the raw amino-acid sequence, 212 residues long: Endothelin-1 (212 aa).

The signal sequence occupies residues 1-17; it reads MDYLLMIFSLLFVACQG. Positions 18–50 are excised as a propeptide; sequence APETAVLGAELSAVGENGGEKPTPSPPWRLRRS. Cystine bridges form between Cys-53/Cys-67 and Cys-55/Cys-63. The propeptide occupies 74 to 212; sequence VNTPEHVVPY…RYVTHNRAHW (139 aa). Residues 109-123 are endothelin-like; sequence CQCASQKDKKCWNFC. Basic and acidic residues-rich tracts occupy residues 168-181 and 189-205; these read RSSE…RSET and SFHD…ERYV. Positions 168-212 are disordered; the sequence is RSSEEHLRQTRSETMRNSVKSSFHDPKLKGKPSRERYVTHNRAHW.

This sequence belongs to the endothelin/sarafotoxin family. As to expression, expressed in lung, placental stem villi vessels and in cultured placental vascular smooth muscle cells.

The protein resides in the secreted. Endothelins are endothelium-derived vasoconstrictor peptides. Probable ligand for G-protein coupled receptors EDNRA and EDNRB which activates PTK2B, BCAR1, BCAR3 and, GTPases RAP1 and RHOA cascade in glomerular mesangial cells. Also binds the DEAR/FBXW7-AS1 receptor. Promotes mesenteric arterial wall remodeling via activation of ROCK signaling and subsequent colocalization of NFATC3 with F-actin filaments. NFATC3 then translocates to the nucleus where it subsequently promotes the transcription of the smooth muscle hypertrophy and differentiation marker ACTA2. The sequence is that of Endothelin-1 (EDN1) from Homo sapiens (Human).